The chain runs to 268 residues: Chymotrypsin-C (268 aa).

The signal sequence occupies residues 1–16; that stretch reads MLGITVFTTFLAYASS. Residues 17 to 29 constitute a propeptide, activation peptide; that stretch reads CGAPIFQPNLSAR. Intrachain disulfides connect Cys17–Cys141, Cys59–Cys75, Cys155–Cys222, Cys186–Cys202, and Cys212–Cys243. Asn25 carries N-linked (GlcNAc...) asparagine glycosylation. The Peptidase S1 domain occupies 30–268; that stretch reads VVGGEDAIPH…IDWINQKLQL (239 aa). Residues His74 and Asp121 each act as charge relay system in the active site. The active-site Charge relay system is the Ser216.

It belongs to the peptidase S1 family. Elastase subfamily. Monomer. The zymogen is secreted as a ternary complex composed of procarboxypeptidase A, chymotrypsinogen C and proproteinase E. In terms of tissue distribution, pancreas.

The protein localises to the secreted. It is found in the extracellular space. It carries out the reaction Preferential cleavage: Leu-|-Xaa, Tyr-|-Xaa, Phe-|-Xaa, Met-|-Xaa, Trp-|-Xaa, Gln-|-Xaa, Asn-|-Xaa.. Regulates activation and degradation of trypsinogens and procarboxypeptidases by targeting specific cleavage sites within their zymogen precursors. Has chymotrypsin-type protease activity and hypocalcemic activity. This is Chymotrypsin-C (CTRC) from Bos taurus (Bovine).